Here is a 240-residue protein sequence, read N- to C-terminus: MATLFIADLHLQTEEPAITAGFLHFLQGEARSADALYILGDLFEAWIGDDDPNPLHHDMAAAIKALVDSGVPCYFIHGNRDFLIGKRFARESGMTLLPDENVLELYGRNVLIMHGDTLCTDDTGYLAFRAKVHTPWIQTLFLALPLFIRNRIAAKMRAGSKAANSSKSMTIMDVNPQAVVEVMEKHRVQWLIHGHTHRPDVHQLTANGEPAHRVVLGAWHSEGSMVKVTSEGVELIQFPF.

The Mn(2+) site is built by Asp-8, His-10, Asp-41, Asn-79, and His-114. 79–80 (NR) provides a ligand contact to substrate. The substrate site is built by Asp-122, Ser-160, Asn-164, Lys-167, and His-195. Mn(2+)-binding residues include His-195 and His-197.

It belongs to the LpxH family. It depends on Mn(2+) as a cofactor.

It is found in the cell inner membrane. It catalyses the reaction UDP-2-N,3-O-bis[(3R)-3-hydroxytetradecanoyl]-alpha-D-glucosamine + H2O = 2-N,3-O-bis[(3R)-3-hydroxytetradecanoyl]-alpha-D-glucosaminyl 1-phosphate + UMP + 2 H(+). Its pathway is glycolipid biosynthesis; lipid IV(A) biosynthesis; lipid IV(A) from (3R)-3-hydroxytetradecanoyl-[acyl-carrier-protein] and UDP-N-acetyl-alpha-D-glucosamine: step 4/6. In terms of biological role, hydrolyzes the pyrophosphate bond of UDP-2,3-diacylglucosamine to yield 2,3-diacylglucosamine 1-phosphate (lipid X) and UMP by catalyzing the attack of water at the alpha-P atom. Involved in the biosynthesis of lipid A, a phosphorylated glycolipid that anchors the lipopolysaccharide to the outer membrane of the cell. This chain is UDP-2,3-diacylglucosamine hydrolase, found in Enterobacter sp. (strain 638).